Reading from the N-terminus, the 198-residue chain is LLGTGESGKSTFIKQMRIIHGAGYSEEDKRGFTKLVYQNIFTAMQAMIRAMETLKILYKYEQNKANALLIREVDVEKVTTFEHRYVHAIKTLWDDPGIQECYDRRREYQLSDSAKYYLADVDRIATSGYLPTQQDVLRVRVPTTGIIEYPFDLENIIFRMVDVGGQRSERRKWIHCFENVTSIMFLVALSEYDHVLVE.

A G1 motif region spans residues 1-11; that stretch reads LLGTGESGKST. The region spanning 1–198 is the G-alpha domain; sequence LLGTGESGKS…LSEYDHVLVE (198 aa). Residues 3-10 and 137-140 contribute to the GTP site; these read GTGESGKS and LRVR. Ser-10 contacts Mg(2+). A G2 motif region spans residues 135-143; it reads DVLRVRVPT. Thr-143 provides a ligand contact to Mg(2+). A G3 motif region spans residues 158 to 167; it reads FRMVDVGGQR.

It belongs to the G-alpha family. G(q) subfamily. In terms of assembly, g proteins are composed of 3 units; alpha, beta and gamma. The alpha chain contains the guanine nucleotide binding site. Interacts with RGS22. Interacts with NTSR1.

It is found in the cell membrane. It localises to the cytoplasm. The enzyme catalyses GTP + H2O = GDP + phosphate + H(+). Functionally, guanine nucleotide-binding proteins (G proteins) function as transducers downstream of G protein-coupled receptors (GPCRs) in numerous signaling cascades. The alpha chain contains the guanine nucleotide binding site and alternates between an active, GTP-bound state and an inactive, GDP-bound state. Signaling by an activated GPCR promotes GDP release and GTP binding. The alpha subunit has a low GTPase activity that converts bound GTP to GDP, thereby terminating the signal. Both GDP release and GTP hydrolysis are modulated by numerous regulatory proteins. Signaling is mediated via phospholipase C-beta-dependent inositol lipid hydrolysis for signal propagation: activates phospholipase C-beta: following GPCR activation, GNA11 activates PLC-beta (PLCB1, PLCB2, PLCB3 or PLCB4), leading to production of diacylglycerol (DAG) and inositol 1,4,5-trisphosphate (IP3). Transduces FFAR4 signaling in response to long-chain fatty acids (LCFAs). Together with GNAQ, required for heart development. In the respiratory epithelium, transmits OXGR1-dependent signals that lead to downstream intracellular Ca(2+) release and mucocilliary clearance of airborne pathogens. The polypeptide is Guanine nucleotide-binding protein subunit alpha-11 (GNA11) (Canis lupus familiaris (Dog)).